The primary structure comprises 1024 residues: Gamma-tubulin complex component 5 (1024 aa).

Disordered regions lie at residues 153–203 (IGLG…GGPQ), 523–545 (NEDK…SSRQ), and 853–873 (SQAK…GPPK). A compositionally biased stretch (basic and acidic residues) spans 189–198 (TPLEEQDHNR). Residues 529-543 (DSASASSGSDQGPSS) show a composition bias toward low complexity. Residues 853-864 (SQAKEDIPRDQD) are compositionally biased toward basic and acidic residues.

It belongs to the TUBGCP family. As to quaternary structure, component of the gamma-tubulin ring complex (gTuRC) consisting of TUBGCP2, TUBGCP3, TUBGCP4, TUBGCP5 and TUBGCP6 and gamma-tubulin TUBG1 or TUBG2. TUBGCP2, TUBGCP3, TUBGCP4, TUBGCP5 and TUBGCP6 assemble in a 5:5:2:1:1 stoichiometry; each is associated with a gamma-tubulin, thereby arranging 14 gamma-tubulins in a helical manner. Gamma-tubulin at the first position is blocked by TUBGCP3 at the last position, allowing 13 protafilaments to grow into a microtubule. The gTuRC (via TUBGCP3 and TUBGCP6) interacts with ACTB and MZT1; the interactions form a luminal bridge that stabilizes the initial structure during complex assembly. The gTuRC (via TUBGCP2) interacts with MZT2A/MZT2B and CDK5RAP2 (via CM1 motif); the interactions play a role in gTuRC activation.

It localises to the cytoplasm. The protein localises to the cytoskeleton. It is found in the microtubule organizing center. The protein resides in the centrosome. Its function is as follows. Component of the gamma-tubulin ring complex (gTuRC) which mediates microtubule nucleation. The gTuRC regulates the minus-end nucleation of alpha-beta tubulin heterodimers that grow into microtubule protafilaments, a critical step in centrosome duplication and spindle formation. This Mus musculus (Mouse) protein is Gamma-tubulin complex component 5 (Tubgcp5).